Consider the following 751-residue polypeptide: Fusarisetin A cluster transcription factor fsa6 (751 aa).

A disordered region spans residues 1–35 (MADQAQDVRPTEWGPGKTPQGRARLPSSRPREKPQ). The segment at residues 38 to 66 (CNLCRRRKLRCDRQRPCSSCAQRELGLSC) is a DNA-binding region (zn(2)-C6 fungal-type). The span at 107–116 (NVNAQDQVGA) shows a compositional bias: polar residues. Residues 107–153 (NVNAQDQVGATPSPRGQPRGPDYPTPAAVHAPSTNEEPVSAAVSPAD) form a disordered region.

It localises to the nucleus. Functionally, transcription factor that regulates the expression of the gene cluster that mediates the biosynthesis of fusarisetin A. The polypeptide is Fusarisetin A cluster transcription factor fsa6 (Fusarium sp. (strain FN080326)).